Reading from the N-terminus, the 70-residue chain is Large ribosomal subunit protein uL29 (70 aa).

Belongs to the universal ribosomal protein uL29 family.

The polypeptide is Large ribosomal subunit protein uL29 (Clostridium botulinum (strain Eklund 17B / Type B)).